The following is a 216-amino-acid chain: Elongation factor Ts (216 aa).

An involved in Mg(2+) ion dislocation from EF-Tu region spans residues 80–83 (TDFV).

This sequence belongs to the EF-Ts family.

The protein localises to the cytoplasm. Functionally, associates with the EF-Tu.GDP complex and induces the exchange of GDP to GTP. It remains bound to the aminoacyl-tRNA.EF-Tu.GTP complex up to the GTP hydrolysis stage on the ribosome. The chain is Elongation factor Ts from Alkaliphilus oremlandii (strain OhILAs) (Clostridium oremlandii (strain OhILAs)).